Reading from the N-terminus, the 118-residue chain is Basic leucine zipper transcriptional factor ATF-like 3 (118 aa).

Residues 1–69 form a disordered region; it reads MSQGPPAVSV…HESLEQENSV (69 aa). Residues S2 and S24 each carry the phosphoserine modification. The 64-residue stretch at 28–91 folds into the bZIP domain; sequence DDRKVRRREK…RHLSEVLKEH (64 aa). The segment at 30–55 is basic motif; the sequence is RKVRRREKNRVAAQRSRKKQTQKADK. Residues 51 to 69 show a composition bias toward basic and acidic residues; the sequence is QKADKLHEEHESLEQENSV. The leucine-zipper stretch occupies residues 56–84; the sequence is LHEEHESLEQENSVLRREISKLKEELRHL.

The protein belongs to the bZIP family. Heterodimer; heterodimerizes with JUN family proteins. Interacts with JUN. Highly expressed in CD8-alpha(+) classical dendritic cells (cDCs), with low to absent expression in other immune cells and non-immune tissues.

The protein resides in the nucleus. Functionally, AP-1 family transcription factor that controls the differentiation of CD8(+) thymic conventional dendritic cells in the immune system. Acts via the formation of a heterodimer with JUN family proteins that recognizes and binds DNA sequence 5'-TGA[CG]TCA-3' and regulates expression of target genes. Required for development of CD8-alpha(+) classical dendritic cells (cDCs) and related CD103(+) dendritic cells that cross-present antigens to CD8 T-cells and produce interleukin-12 (IL12) in response to pathogens. In Mus musculus (Mouse), this protein is Basic leucine zipper transcriptional factor ATF-like 3 (Batf3).